Reading from the N-terminus, the 405-residue chain is Patatin-like protein 2 (405 aa).

The 207-residue stretch at 24 to 230 folds into the PNPLA domain; the sequence is LSIDGGGVRG…AANNPTLCAM (207 aa). Positions 28–33 match the GXGXXG motif; that stretch reads GGGVRG. A GXSXG motif is present at residues 66 to 70; the sequence is GTSTG. Residue Ser68 is the Nucleophile of the active site. Residue Asp217 is the Proton acceptor of the active site. Positions 217–219 match the DGA/G motif; sequence DGG.

Belongs to the patatin family.

Its function is as follows. Possesses non-specific lipolytic acyl hydrolase (LAH) activity. Hydrolyzes phospholipids as well as galactolipids. May play a role in disease resistance. The sequence is that of Patatin-like protein 2 (PLP2) from Oryza sativa subsp. indica (Rice).